Consider the following 205-residue polypeptide: Ribonuclease HII (205 aa).

Residues 13–205 (TIVAGVDEVG…APVKYMLSMC (193 aa)) form the RNase H type-2 domain. Positions 19, 20, and 114 each coordinate a divalent metal cation.

This sequence belongs to the RNase HII family. It depends on Mn(2+) as a cofactor. Requires Mg(2+) as cofactor.

The protein localises to the cytoplasm. It carries out the reaction Endonucleolytic cleavage to 5'-phosphomonoester.. In terms of biological role, endonuclease that specifically degrades the RNA of RNA-DNA hybrids. The protein is Ribonuclease HII of Blochmanniella floridana.